A 201-amino-acid polypeptide reads, in one-letter code: Recombination protein RecR (201 aa).

The C4-type zinc finger occupies 60–75; sequence CQICGNIDTRDPCTIC. The region spanning 83 to 178 is the Toprim domain; sequence TLLVVVETVA…KITRLAHGVP (96 aa).

It belongs to the RecR family.

Functionally, may play a role in DNA repair. It seems to be involved in an RecBC-independent recombinational process of DNA repair. It may act with RecF and RecO. In Beijerinckia indica subsp. indica (strain ATCC 9039 / DSM 1715 / NCIMB 8712), this protein is Recombination protein RecR.